The sequence spans 177 residues: Large ribosomal subunit protein uL6 (177 aa).

The protein belongs to the universal ribosomal protein uL6 family. Part of the 50S ribosomal subunit.

This protein binds to the 23S rRNA, and is important in its secondary structure. It is located near the subunit interface in the base of the L7/L12 stalk, and near the tRNA binding site of the peptidyltransferase center. This chain is Large ribosomal subunit protein uL6, found in Methylocella silvestris (strain DSM 15510 / CIP 108128 / LMG 27833 / NCIMB 13906 / BL2).